Here is a 120-residue protein sequence, read N- to C-terminus: Large ribosomal subunit protein bL20 (120 aa).

This sequence belongs to the bacterial ribosomal protein bL20 family.

Binds directly to 23S ribosomal RNA and is necessary for the in vitro assembly process of the 50S ribosomal subunit. It is not involved in the protein synthesizing functions of that subunit. The sequence is that of Large ribosomal subunit protein bL20 from Mesoplasma florum (strain ATCC 33453 / NBRC 100688 / NCTC 11704 / L1) (Acholeplasma florum).